The following is a 283-amino-acid chain: 4-hydroxy-tetrahydrodipicolinate reductase (283 aa).

NAD(+) is bound by residues 15-20 (GALGRM) and 116-118 (GTT). The active-site Proton donor/acceptor is His-172. His-173 lines the (S)-2,3,4,5-tetrahydrodipicolinate pocket. The Proton donor role is filled by Lys-176. 182–183 (GT) contributes to the (S)-2,3,4,5-tetrahydrodipicolinate binding site.

It belongs to the DapB family.

Its subcellular location is the cytoplasm. It carries out the reaction (S)-2,3,4,5-tetrahydrodipicolinate + NAD(+) + H2O = (2S,4S)-4-hydroxy-2,3,4,5-tetrahydrodipicolinate + NADH + H(+). The enzyme catalyses (S)-2,3,4,5-tetrahydrodipicolinate + NADP(+) + H2O = (2S,4S)-4-hydroxy-2,3,4,5-tetrahydrodipicolinate + NADPH + H(+). It participates in amino-acid biosynthesis; L-lysine biosynthesis via DAP pathway; (S)-tetrahydrodipicolinate from L-aspartate: step 4/4. In terms of biological role, catalyzes the conversion of 4-hydroxy-tetrahydrodipicolinate (HTPA) to tetrahydrodipicolinate. The chain is 4-hydroxy-tetrahydrodipicolinate reductase from Prochlorococcus marinus (strain MIT 9313).